Here is a 633-residue protein sequence, read N- to C-terminus: Molybdenum cofactor biosynthesis protein 1 (633 aa).

Residues 1–380 are molybdenum cofactor biosynthesis protein A; it reads MAAQPVSRVV…QMKNRPMILI (380 aa). Residue serine 61 is modified to Phosphoserine. Residues 61–295 enclose the Radical SAM core domain; the sequence is SFGRHHSYLR…AKAFKIPGFR (235 aa). Arginine 70 is a GTP binding site. [4Fe-4S] cluster-binding residues include cysteine 77 and cysteine 81. Residue tyrosine 83 participates in S-adenosyl-L-methionine binding. Cysteine 84 contacts [4Fe-4S] cluster. Residue arginine 120 participates in GTP binding. Residue glycine 124 coordinates S-adenosyl-L-methionine. Threonine 151 contacts GTP. Serine 175 contributes to the S-adenosyl-L-methionine binding site. Lysine 195 carries the N6-acetyllysine modification. Lysine 212 serves as a coordination point for GTP. Position 246 (methionine 246) interacts with S-adenosyl-L-methionine. 2 residues coordinate [4Fe-4S] cluster: cysteine 309 and cysteine 312. Residue 314–316 coordinates GTP; the sequence is RLR. A [4Fe-4S] cluster-binding site is contributed by cysteine 326. The segment at 410–633 is molybdenum cofactor biosynthesis protein C; the sequence is VSFSSQMVTL…GGQRGDFHRT (224 aa). The disordered stretch occupies residues 446–480; that stretch reads SSHLDSDANPKCLSPTEPQAPAASSGPLPDSDQLT. Lysine 525 bears the N6-acetyllysine mark. Aspartate 603 serves as the catalytic For molybdenum cofactor biosynthesis protein C activity.

The protein in the C-terminal section; belongs to the MoaC family. It in the N-terminal section; belongs to the radical SAM superfamily. MoaA family. Isoform MOCS1A and isoform MOCS1B probably form a heterooligomer. Requires [4Fe-4S] cluster as cofactor.

The catalysed reaction is GTP + AH2 + S-adenosyl-L-methionine = (8S)-3',8-cyclo-7,8-dihydroguanosine 5'-triphosphate + 5'-deoxyadenosine + L-methionine + A + H(+). The enzyme catalyses (8S)-3',8-cyclo-7,8-dihydroguanosine 5'-triphosphate = cyclic pyranopterin phosphate + diphosphate. It functions in the pathway cofactor biosynthesis; molybdopterin biosynthesis. Functionally, isoform MOCS1A and isoform MOCS1B probably form a complex that catalyzes the conversion of 5'-GTP to cyclic pyranopterin monophosphate (cPMP). MOCS1A catalyzes the cyclization of GTP to (8S)-3',8-cyclo-7,8-dihydroguanosine 5'-triphosphate and MOCS1B catalyzes the subsequent conversion of (8S)-3',8-cyclo-7,8-dihydroguanosine 5'-triphosphate to cPMP. The sequence is that of Molybdenum cofactor biosynthesis protein 1 (MOCS1) from Bos taurus (Bovine).